The sequence spans 593 residues: Mitochondrial sodium/calcium exchanger protein (593 aa).

An N-terminal signal peptide occupies residues 1–20 (MGPLWALRVAGALSVAGVLA). Over 21-93 (GHDGSQRAGQ…GAFCTFPSSL (73 aa)) the chain is Extracellular. Asn-58 carries N-linked (GlcNAc...) asparagine glycosylation. Residues 94-114 (LPLSVSLYALWLLYLFVILGV) form a helical membrane-spanning segment. Over 115-135 (TAEKFFCPNLSAISTNLKLSH) the chain is Cytoplasmic. The chain crosses the membrane as a helical span at residues 136-158 (NGLGVVGHSLTPALHGVTFLAFG). At 159–178 (NGAPDIFSAVVAFSDPRTAG) the chain is on the extracellular side. A helical transmembrane segment spans residues 179–199 (LAVGAIFGAGIFVTTVVAGGI). The Cytoplasmic portion of the chain corresponds to 200-215 (ALVKPFAAASRPFLRD). A helical membrane pass occupies residues 216–236 (VIFYMVAVFLTFLVLYFGYIT). Residues 237–239 (LGE) are Extracellular-facing. Residues 240–260 (ALGYLGLYVFYVFTVVLCTWI) traverse the membrane as a helical segment. The Cytoplasmic segment spans residues 261–334 (HRWQRGDGPP…KWRRKPWYWR (74 aa)). Positions 268–277 (GPPPPGPWEP) are enriched in pro residues. Residues 268–291 (GPPPPGPWEPAIPTDAEEQESSGT) are disordered. A helical transmembrane segment spans residues 335 to 355 (LFKVLKVPVELVLLLTVPVVD). The Extracellular portion of the chain corresponds to 356–369 (PDKDDLNWKRPLNC). The chain crosses the membrane as a helical span at residues 370 to 390 (LHIVTGPLLCIFTLKSGAYGL). The Cytoplasmic segment spans residues 391 to 395 (YQIQG). The helical transmembrane segment at 396 to 416 (VFPVWALVALAGSVLAIIVFV) threads the bilayer. Residues 417–428 (TTHNEEPPKYHC) lie on the Extracellular side of the membrane. The chain crosses the membrane as a helical span at residues 429-449 (VFAFLGFLSSAMWINAAATEL). Residues 450–454 (VNILR) are Cytoplasmic-facing. Residues 455 to 475 (TLGIIFELSNTVLGLTLLAWG) form a helical membrane-spanning segment. Over 476–496 (NSIGDTFSDLTMARQGYPRMA) the chain is Extracellular. A helical transmembrane segment spans residues 497–517 (FSACFGGIIFNILVGVGLGCL). The Cytoplasmic segment spans residues 518 to 533 (LQMTNSQMVVKLEPDS). A helical transmembrane segment spans residues 534-554 (LLVWILAGALGLSLVFSFVAV). The Extracellular portion of the chain corresponds to 555-564 (PAQCFQLGKA). A helical transmembrane segment spans residues 565-585 (YGTCLILYYLVFLCVALLTEF). At 586-593 (RVIHLAAT) the chain is on the cytoplasmic side.

This sequence belongs to the Ca(2+):cation antiporter (CaCA) (TC 2.A.19) family. SLC24A subfamily.

Its subcellular location is the mitochondrion inner membrane. The catalysed reaction is Ca(2+)(in) + 3 Na(+)(out) = Ca(2+)(out) + 3 Na(+)(in). Its function is as follows. Mitochondrial sodium/calcium antiporter that mediates sodium-dependent calcium efflux from mitochondrion, by mediating the exchange of 3 sodium ions per 1 calcium ion. Plays a central role in mitochondrial calcium homeostasis by mediating mitochondrial calcium extrusion: calcium efflux is essential for mitochondrial function and cell survival, notably in cardiomyocytes. Involved in B-lymphocyte chemotaxis. The protein is Mitochondrial sodium/calcium exchanger protein of Gallus gallus (Chicken).